A 233-amino-acid polypeptide reads, in one-letter code: Biosynthetic peptidoglycan transglycosylase (233 aa).

Residues 8–28 (LIALPVGIFIFFNAYVYGNII) traverse the membrane as a helical segment.

This sequence belongs to the glycosyltransferase 51 family.

Its subcellular location is the cell inner membrane. It carries out the reaction [GlcNAc-(1-&gt;4)-Mur2Ac(oyl-L-Ala-gamma-D-Glu-L-Lys-D-Ala-D-Ala)](n)-di-trans,octa-cis-undecaprenyl diphosphate + beta-D-GlcNAc-(1-&gt;4)-Mur2Ac(oyl-L-Ala-gamma-D-Glu-L-Lys-D-Ala-D-Ala)-di-trans,octa-cis-undecaprenyl diphosphate = [GlcNAc-(1-&gt;4)-Mur2Ac(oyl-L-Ala-gamma-D-Glu-L-Lys-D-Ala-D-Ala)](n+1)-di-trans,octa-cis-undecaprenyl diphosphate + di-trans,octa-cis-undecaprenyl diphosphate + H(+). The protein operates within cell wall biogenesis; peptidoglycan biosynthesis. Peptidoglycan polymerase that catalyzes glycan chain elongation from lipid-linked precursors. This chain is Biosynthetic peptidoglycan transglycosylase, found in Neisseria meningitidis serogroup B (strain ATCC BAA-335 / MC58).